A 169-amino-acid polypeptide reads, in one-letter code: uncharacterized protein (169 aa).

This is an uncharacterized protein from Mycoplasma pneumoniae (strain ATCC 29342 / M129 / Subtype 1) (Mycoplasmoides pneumoniae).